A 581-amino-acid chain; its full sequence is Adenine deaminase (581 aa).

Belongs to the metallo-dependent hydrolases superfamily. Adenine deaminase family. Mn(2+) is required as a cofactor.

It carries out the reaction adenine + H2O + H(+) = hypoxanthine + NH4(+). The sequence is that of Adenine deaminase from Lysinibacillus sphaericus (strain C3-41).